The following is a 124-amino-acid chain: Type-4 ice-structuring protein (124 aa).

The first 20 residues, 1-20, serve as a signal peptide directing secretion; that stretch reads MKFSLIAAVALLALAQGSFA. Gln-21 is subject to Pyrrolidone carboxylic acid.

This sequence belongs to the apolipoprotein A1/A4/E family.

The protein localises to the secreted. Antifreeze proteins lower the blood freezing point. This Paralichthys olivaceus (Bastard halibut) protein is Type-4 ice-structuring protein.